A 316-amino-acid chain; its full sequence is MIASALSFIFGGCCSNAYALEALVREFPSSGILITFSQFILITIEGLIYFLLNDVQSLKHPKVPRKRWFVVVVMFFAINVLNNVALGFDISVPVHIILRSSGPLTTMAVGRILAGKRYSSLQIGSVFILTIGVIIATLGNAKDLHLHVESMTRFGIGFTILVITQILGAIMGLVLENTYRIYGSDWRESLFYTHALSLPFFLFLLRPIRSQWNDLFAIHTKGFLNLPSGVWYLCFNTLAQYFCVRGVNALGAETSALTVSVVLNVRKFVSLCLSLILFENEMGPAVKFGALLVFGSSAVYASARSKPKTNGLKKND.

Residues 1 to 3 (MIA) are Cytoplasmic-facing. The chain crosses the membrane as a helical span at residues 4–24 (SALSFIFGGCCSNAYALEALV). Residues 25 to 31 (REFPSSG) are Lumenal-facing. A helical membrane pass occupies residues 32–52 (ILITFSQFILITIEGLIYFLL). Residues 53 to 67 (NDVQSLKHPKVPRKR) lie on the Cytoplasmic side of the membrane. Residues 68-88 (WFVVVVMFFAINVLNNVALGF) traverse the membrane as a helical segment. Topologically, residues 89–120 (DISVPVHIILRSSGPLTTMAVGRILAGKRYSS) are lumenal. Residues 121–141 (LQIGSVFILTIGVIIATLGNA) traverse the membrane as a helical segment. The Cytoplasmic portion of the chain corresponds to 142–153 (KDLHLHVESMTR). A helical membrane pass occupies residues 154-174 (FGIGFTILVITQILGAIMGLV). Over 175 to 187 (LENTYRIYGSDWR) the chain is Lumenal. Residues 188–208 (ESLFYTHALSLPFFLFLLRPI) form a helical membrane-spanning segment. Over 209 to 214 (RSQWND) the chain is Cytoplasmic. A helical transmembrane segment spans residues 215–235 (LFAIHTKGFLNLPSGVWYLCF). At 236–274 (NTLAQYFCVRGVNALGAETSALTVSVVLNVRKFVSLCLS) the chain is on the lumenal side. A helical membrane pass occupies residues 275 to 295 (LILFENEMGPAVKFGALLVFG). Topologically, residues 296 to 316 (SSAVYASARSKPKTNGLKKND) are cytoplasmic.

It belongs to the nucleotide-sugar transporter family. SLC35B subfamily.

The protein resides in the endoplasmic reticulum. It is found in the endoplasmic reticulum membrane. In terms of biological role, sugar transporter that specifically mediates the transport of UDP-N-acetylglucosamine (UDP-GlcNAc) and is required for cell wall chitin synthesis. The polypeptide is UDP-N-acetylglucosamine transporter yea4 (yea4) (Schizosaccharomyces pombe (strain 972 / ATCC 24843) (Fission yeast)).